Reading from the N-terminus, the 460-residue chain is Chromosomal replication initiator protein DnaA (460 aa).

The interval 1–83 (MENIWLEAQT…EFHVADEKPE (83 aa)) is domain I, interacts with DnaA modulators. Positions 78–121 (ADEKPEAAPEEKPEKEGKPAREKEKDKDKEKEKDREKEKDKKEL) are enriched in basic and acidic residues. Positions 78-122 (ADEKPEAAPEEKPEKEGKPAREKEKDKDKEKEKDREKEKDKKELV) are disordered. The interval 83-123 (EAAPEEKPEKEGKPAREKEKDKDKEKEKDREKEKDKKELVP) is domain II. Residues 124-340 (NLNPKYTFES…GMLIRLEAFA (217 aa)) are domain III, AAA+ region. 4 residues coordinate ATP: G168, G170, K171, and T172. The tract at residues 341 to 460 (SLTGQEITLS…VEDIRKKLFT (120 aa)) is domain IV, binds dsDNA.

Belongs to the DnaA family. In terms of assembly, oligomerizes as a right-handed, spiral filament on DNA at oriC.

It localises to the cytoplasm. In terms of biological role, plays an essential role in the initiation and regulation of chromosomal replication. ATP-DnaA binds to the origin of replication (oriC) to initiate formation of the DNA replication initiation complex once per cell cycle. Binds the DnaA box (a 9 base pair repeat at the origin) and separates the double-stranded (ds)DNA. Forms a right-handed helical filament on oriC DNA; dsDNA binds to the exterior of the filament while single-stranded (ss)DNA is stabiized in the filament's interior. The ATP-DnaA-oriC complex binds and stabilizes one strand of the AT-rich DNA unwinding element (DUE), permitting loading of DNA polymerase. After initiation quickly degrades to an ADP-DnaA complex that is not apt for DNA replication. Binds acidic phospholipids. The sequence is that of Chromosomal replication initiator protein DnaA from Geobacter sp. (strain M21).